The following is a 345-amino-acid chain: MTEIRDDSISIALDAMGGDSAPDVVIEGANLVLSGVVPCDGKVHFSIYGKKEEVLPVLAKYKLVEANSVFVDVSDAVSSSDRPSYALRHRRRSSMWHAVEDLKKGLVSAVVSAGNTGALMAISRHLLGTIHSIDRPAIAVAMPSQKSSFVVLDIGANIECSADALLQFAIMGVAFAKAILGRTDPKVGLLNVGSEEVKGTYAVQEAFSLMRAAKSKMDFYGYIEAEEVFKGEVDVVVADGFSGNIMLKTTEAVANLLMSLFKGVVKSSITAKIAACMLKPSVRKTMELVDPKLYNGAMLVGLNGVVVKSHGSADGKAYACAIKTAVHSARYAIVSKIASEISEMG.

Belongs to the PlsX family. Homodimer. Probably interacts with PlsY.

It is found in the cytoplasm. It catalyses the reaction a fatty acyl-[ACP] + phosphate = an acyl phosphate + holo-[ACP]. It functions in the pathway lipid metabolism; phospholipid metabolism. Its function is as follows. Catalyzes the reversible formation of acyl-phosphate (acyl-PO(4)) from acyl-[acyl-carrier-protein] (acyl-ACP). This enzyme utilizes acyl-ACP as fatty acyl donor, but not acyl-CoA. This is Phosphate acyltransferase from Anaplasma phagocytophilum (strain HZ).